The chain runs to 85 residues: Toxin Cll6 (85 aa).

The first 19 residues, 1–19, serve as a signal peptide directing secretion; it reads MNSLLMIIGCLVLIGTVWT. Residues 20–83 enclose the LCN-type CS-alpha/beta domain; it reads KEGYLVNMKT…TWPLPGKSCS (64 aa). 4 cysteine pairs are disulfide-bonded: Cys31–Cys82, Cys35–Cys58, Cys44–Cys63, and Cys48–Cys65. Residue Ser83 is modified to Serine amide.

This sequence belongs to the long (4 C-C) scorpion toxin superfamily. Sodium channel inhibitor family. Beta subfamily. Expressed by the venom gland.

The protein localises to the secreted. Beta toxins bind voltage-independently at site-4 of sodium channels (Nav) and shift the voltage of activation toward more negative potentials thereby affecting sodium channel activation and promoting spontaneous and repetitive firing. The chain is Toxin Cll6 from Centruroides limpidus (Mexican scorpion).